We begin with the raw amino-acid sequence, 361 residues long: Protein Csal_2339 (361 aa).

Residue S91 is the Proton acceptor of the active site. Substrate-binding positions include G92–S93 and G259–T260.

This sequence belongs to the proline racemase family.

It catalyses the reaction trans-4-hydroxy-L-proline = cis-4-hydroxy-D-proline. Its function is as follows. In vitro, catalyzes the epimerization of trans-4-hydroxy-L-proline (t4LHyp) to cis-4-hydroxy-D-proline (c4DHyp), albeit with very low efficiency. The physiological substrate may be different. Displays neither proline racemase activity nor t3LHyp dehydratase activity. The chain is Protein Csal_2339 from Chromohalobacter salexigens (strain ATCC BAA-138 / DSM 3043 / CIP 106854 / NCIMB 13768 / 1H11).